Consider the following 75-residue polypeptide: UPF0352 protein YejL (75 aa).

Belongs to the UPF0352 family.

The chain is UPF0352 protein YejL from Shigella sonnei (strain Ss046).